Consider the following 156-residue polypeptide: ATP synthase subunit b (156 aa).

The helical transmembrane segment at 11–31 threads the bilayer; sequence AIAFILFVWFCMKYVWPPLMA.

The protein belongs to the ATPase B chain family. As to quaternary structure, F-type ATPases have 2 components, F(1) - the catalytic core - and F(0) - the membrane proton channel. F(1) has five subunits: alpha(3), beta(3), gamma(1), delta(1), epsilon(1). F(0) has three main subunits: a(1), b(2) and c(10-14). The alpha and beta chains form an alternating ring which encloses part of the gamma chain. F(1) is attached to F(0) by a central stalk formed by the gamma and epsilon chains, while a peripheral stalk is formed by the delta and b chains.

It is found in the cell inner membrane. Functionally, f(1)F(0) ATP synthase produces ATP from ADP in the presence of a proton or sodium gradient. F-type ATPases consist of two structural domains, F(1) containing the extramembraneous catalytic core and F(0) containing the membrane proton channel, linked together by a central stalk and a peripheral stalk. During catalysis, ATP synthesis in the catalytic domain of F(1) is coupled via a rotary mechanism of the central stalk subunits to proton translocation. In terms of biological role, component of the F(0) channel, it forms part of the peripheral stalk, linking F(1) to F(0). The chain is ATP synthase subunit b from Salmonella agona (strain SL483).